Here is a 294-residue protein sequence, read N- to C-terminus: Pyridoxal 5'-phosphate synthase subunit PdxS (294 aa).

Asp24 contributes to the D-ribose 5-phosphate binding site. The Schiff-base intermediate with D-ribose 5-phosphate role is filled by Lys81. Residue Gly153 coordinates D-ribose 5-phosphate. Arg165 lines the D-glyceraldehyde 3-phosphate pocket. Residues Gly214 and 235-236 (GS) contribute to the D-ribose 5-phosphate site.

The protein belongs to the PdxS/SNZ family. As to quaternary structure, in the presence of PdxT, forms a dodecamer of heterodimers.

The enzyme catalyses aldehydo-D-ribose 5-phosphate + D-glyceraldehyde 3-phosphate + L-glutamine = pyridoxal 5'-phosphate + L-glutamate + phosphate + 3 H2O + H(+). It participates in cofactor biosynthesis; pyridoxal 5'-phosphate biosynthesis. Its function is as follows. Catalyzes the formation of pyridoxal 5'-phosphate from ribose 5-phosphate (RBP), glyceraldehyde 3-phosphate (G3P) and ammonia. The ammonia is provided by the PdxT subunit. Can also use ribulose 5-phosphate and dihydroxyacetone phosphate as substrates, resulting from enzyme-catalyzed isomerization of RBP and G3P, respectively. This is Pyridoxal 5'-phosphate synthase subunit PdxS from Geobacillus thermodenitrificans (strain NG80-2).